Reading from the N-terminus, the 116-residue chain is MAGRSGDNDDQLLLAVRIIKILYQSNPYSKPNGSRQARRNRRRRWRARQNQIDSISERILSSCLGRPAEPVPLQLPPIERLRLDCSEDCGNSGTQGVGDPQISGEPCMVLGAGTKE.

Ser-5 is modified (phosphoserine; by host CK2). Residues 18-26 (IIKILYQSN) form a homomultimerization region. The disordered stretch occupies residues 26–48 (NPYSKPNGSRQARRNRRRRWRAR). A Nuclear localization signal and RNA-binding (RRE) motif is present at residues 34-50 (SRQARRNRRRRWRARQN). Residues 36–47 (QARRNRRRRWRA) are compositionally biased toward basic residues. The Nuclear export signal and binding to XPO1 motif lies at 73-84 (LQLPPIERLRLD). A Phosphoserine; by host modification is found at Ser-92.

This sequence belongs to the HIV-1 REV protein family. As to quaternary structure, homomultimer; when bound to the RRE. Multimeric assembly is essential for activity and may involve XPO1. Binds to human KPNB1, XPO1, TNPO1, RANBP5 and IPO7. Interacts with the viral Integrase. Interacts with human KHDRBS1. Interacts with human NAP1; this interaction decreases Rev multimerization and stimulates its activity. Interacts with human DEAD-box helicases DDX3 and DDX24; these interactions may serve for viral RNA export to the cytoplasm and packaging, respectively. Interacts with human PSIP1; this interaction may inhibit HIV-1 DNA integration by promoting dissociation of the Integrase-LEDGF/p75 complex. Asymmetrically arginine dimethylated at one site by host PRMT6. Methylation impairs the RNA-binding activity and export of viral RNA from the nucleus to the cytoplasm. Post-translationally, phosphorylated by protein kinase CK2. Presence of, and maybe binding to the N-terminus of the regulatory beta subunit of CK2 is necessary for CK2-mediated Rev's phosphorylation.

The protein resides in the host nucleus. It localises to the host nucleolus. The protein localises to the host cytoplasm. Its function is as follows. Escorts unspliced or incompletely spliced viral pre-mRNAs (late transcripts) out of the nucleus of infected cells. These pre-mRNAs carry a recognition sequence called Rev responsive element (RRE) located in the env gene, that is not present in fully spliced viral mRNAs (early transcripts). This function is essential since most viral proteins are translated from unspliced or partially spliced pre-mRNAs which cannot exit the nucleus by the pathway used by fully processed cellular mRNAs. Rev itself is translated from a fully spliced mRNA that readily exits the nucleus. Rev's nuclear localization signal (NLS) binds directly to KPNB1/Importin beta-1 without previous binding to KPNA1/Importin alpha-1. KPNB1 binds to the GDP bound form of RAN (Ran-GDP) and targets Rev to the nucleus. In the nucleus, the conversion from Ran-GDP to Ran-GTP dissociates Rev from KPNB1 and allows Rev's binding to the RRE in viral pre-mRNAs. Rev multimerization on the RRE via cooperative assembly exposes its nuclear export signal (NES) to the surface. Rev can then form a complex with XPO1/CRM1 and Ran-GTP, leading to nuclear export of the complex. Conversion from Ran-GTP to Ran-GDP mediates dissociation of the Rev/RRE/XPO1/RAN complex, so that Rev can return to the nucleus for a subsequent round of export. Beside KPNB1, also seems to interact with TNPO1/Transportin-1, RANBP5/IPO5 and IPO7/RANBP7 for nuclear import. The nucleoporin-like HRB/RIP is an essential cofactor that probably indirectly interacts with Rev to release HIV RNAs from the perinuclear region to the cytoplasm. The chain is Protein Rev from Homo sapiens (Human).